The chain runs to 147 residues: Protein SprT-like (147 aa).

The region spanning 5 to 142 (DYVNEVSLED…SFCRGHLKEI (138 aa)) is the SprT-like domain. H64 contacts Zn(2+). Residue E65 is part of the active site. Residue H68 participates in Zn(2+) binding.

The protein belongs to the SprT family. Zn(2+) is required as a cofactor.

It is found in the cytoplasm. The polypeptide is Protein SprT-like (Streptococcus uberis (strain ATCC BAA-854 / 0140J)).